Reading from the N-terminus, the 816-residue chain is Leucine--tRNA ligase (816 aa).

The 'HIGH' region signature appears at 40–51 (PYPSGSGLHVGH). Residues 576 to 580 (KMSKS) carry the 'KMSKS' region motif. ATP is bound at residue Lys579.

The protein belongs to the class-I aminoacyl-tRNA synthetase family.

The protein resides in the cytoplasm. The enzyme catalyses tRNA(Leu) + L-leucine + ATP = L-leucyl-tRNA(Leu) + AMP + diphosphate. The sequence is that of Leucine--tRNA ligase from Chlorobium phaeobacteroides (strain DSM 266 / SMG 266 / 2430).